The following is a 192-amino-acid chain: Phosphoheptose isomerase (192 aa).

Residues 35 to 192 (LIETLENQGK…CIERHFAHKN (158 aa)) form the SIS domain. 50–52 (NGG) serves as a coordination point for substrate. Positions 59 and 63 each coordinate Zn(2+). Substrate contacts are provided by residues glutamate 63, 92 to 93 (ND), 118 to 120 (STS), serine 123, and glutamine 170. Glutamine 170 and histidine 178 together coordinate Zn(2+).

It belongs to the SIS family. GmhA subfamily. As to quaternary structure, homotetramer. Zn(2+) serves as cofactor.

It is found in the cytoplasm. It catalyses the reaction 2 D-sedoheptulose 7-phosphate = D-glycero-alpha-D-manno-heptose 7-phosphate + D-glycero-beta-D-manno-heptose 7-phosphate. The protein operates within carbohydrate biosynthesis; D-glycero-D-manno-heptose 7-phosphate biosynthesis; D-glycero-alpha-D-manno-heptose 7-phosphate and D-glycero-beta-D-manno-heptose 7-phosphate from sedoheptulose 7-phosphate: step 1/1. Its function is as follows. Catalyzes the isomerization of sedoheptulose 7-phosphate in D-glycero-D-manno-heptose 7-phosphate. The polypeptide is Phosphoheptose isomerase (Helicobacter pylori (strain P12)).